The primary structure comprises 364 residues: Coproporphyrin III ferrochelatase (364 aa).

Residues Arg29 and Tyr118 each contribute to the Fe-coproporphyrin III site. Residues His169 and Glu250 each coordinate Fe(2+).

The protein belongs to the ferrochelatase family.

It localises to the cytoplasm. The catalysed reaction is Fe-coproporphyrin III + 2 H(+) = coproporphyrin III + Fe(2+). Its pathway is porphyrin-containing compound metabolism; protoheme biosynthesis. Involved in coproporphyrin-dependent heme b biosynthesis. Catalyzes the insertion of ferrous iron into coproporphyrin III to form Fe-coproporphyrin III. In Streptococcus pneumoniae (strain Hungary19A-6), this protein is Coproporphyrin III ferrochelatase.